Here is a 624-residue protein sequence, read N- to C-terminus: Dihydroxy-acid dehydratase (624 aa).

Residue aspartate 81 participates in Mg(2+) binding. Cysteine 122 lines the [2Fe-2S] cluster pocket. Mg(2+) is bound by residues aspartate 123 and lysine 124. Lysine 124 carries the post-translational modification N6-carboxylysine. Position 195 (cysteine 195) interacts with [2Fe-2S] cluster. Glutamate 499 contacts Mg(2+). The active-site Proton acceptor is the serine 525.

It belongs to the IlvD/Edd family. Homodimer. [2Fe-2S] cluster serves as cofactor. It depends on Mg(2+) as a cofactor.

The enzyme catalyses (2R)-2,3-dihydroxy-3-methylbutanoate = 3-methyl-2-oxobutanoate + H2O. The catalysed reaction is (2R,3R)-2,3-dihydroxy-3-methylpentanoate = (S)-3-methyl-2-oxopentanoate + H2O. Its pathway is amino-acid biosynthesis; L-isoleucine biosynthesis; L-isoleucine from 2-oxobutanoate: step 3/4. The protein operates within amino-acid biosynthesis; L-valine biosynthesis; L-valine from pyruvate: step 3/4. In terms of biological role, functions in the biosynthesis of branched-chain amino acids. Catalyzes the dehydration of (2R,3R)-2,3-dihydroxy-3-methylpentanoate (2,3-dihydroxy-3-methylvalerate) into 2-oxo-3-methylpentanoate (2-oxo-3-methylvalerate) and of (2R)-2,3-dihydroxy-3-methylbutanoate (2,3-dihydroxyisovalerate) into 2-oxo-3-methylbutanoate (2-oxoisovalerate), the penultimate precursor to L-isoleucine and L-valine, respectively. This Shewanella baltica (strain OS155 / ATCC BAA-1091) protein is Dihydroxy-acid dehydratase.